An 84-amino-acid chain; its full sequence is LYR motif-containing protein 5B (84 aa).

This sequence belongs to the complex I LYR family.

In Danio rerio (Zebrafish), this protein is LYR motif-containing protein 5B (lyrm5b).